We begin with the raw amino-acid sequence, 21 residues long: Granule-bound starch synthase 1 (21 aa).

It belongs to the glycosyltransferase 1 family. Bacterial/plant glycogen synthase subfamily.

It is found in the plastid. The protein resides in the chloroplast. Its subcellular location is the amyloplast. It carries out the reaction an NDP-alpha-D-glucose + [(1-&gt;4)-alpha-D-glucosyl](n) = [(1-&gt;4)-alpha-D-glucosyl](n+1) + a ribonucleoside 5'-diphosphate + H(+). Its pathway is glycan biosynthesis; starch biosynthesis. This chain is Granule-bound starch synthase 1, found in Secale cereale (Rye).